The sequence spans 80 residues: Peroxidase (80 aa).

Residues 56 to 80 (DANEAEANSDLPGFNSSRSELEAAF) form a disordered region. Residue Pro67 coordinates substrate. Asn70 carries N-linked (GlcNAc...) asparagine glycosylation.

It belongs to the peroxidase family. Classical plant (class III) peroxidase subfamily. Ca(2+) is required as a cofactor. It depends on heme b as a cofactor.

It carries out the reaction 2 a phenolic donor + H2O2 = 2 a phenolic radical donor + 2 H2O. Removal of H(2)O(2), oxidation of toxic reductants, biosynthesis and degradation of lignin, suberization, auxin catabolism, response to environmental stresses such as wounding, pathogen attack and oxidative stress. These functions might be dependent on each isozyme/isoform in each plant tissue. The sequence is that of Peroxidase from Triticum aestivum (Wheat).